The following is a 127-amino-acid chain: MEINSNSSLWHSYNSGYNGNKPHPLSPKGDQVKVSITEDRHYKDVKQPVSPDYVAESFSEAMKNALTSVNDLQVEADELTQKMVFDPNSVDAHQVMIASEKARVALTFTKTIADGVVRAYRELTSLR.

It belongs to the FliE family.

The protein resides in the bacterial flagellum basal body. This is Flagellar hook-basal body complex protein FliE from Leptospira interrogans serogroup Icterohaemorrhagiae serovar copenhageni (strain Fiocruz L1-130).